The following is a 334-amino-acid chain: Glycerol-3-phosphate dehydrogenase [NAD(P)+] 2 (334 aa).

Residues W16, R36, R37, and K110 each contribute to the NADPH site. Sn-glycerol 3-phosphate is bound by residues K110 and G140. Position 144 (A144) interacts with NADPH. Residues K195, D248, S258, R259, and N260 each coordinate sn-glycerol 3-phosphate. Catalysis depends on K195, which acts as the Proton acceptor. An NADPH-binding site is contributed by R259. Residues V282 and E284 each contribute to the NADPH site.

The protein belongs to the NAD-dependent glycerol-3-phosphate dehydrogenase family.

The protein resides in the cytoplasm. The enzyme catalyses sn-glycerol 3-phosphate + NAD(+) = dihydroxyacetone phosphate + NADH + H(+). It carries out the reaction sn-glycerol 3-phosphate + NADP(+) = dihydroxyacetone phosphate + NADPH + H(+). It participates in membrane lipid metabolism; glycerophospholipid metabolism. In terms of biological role, catalyzes the reduction of the glycolytic intermediate dihydroxyacetone phosphate (DHAP) to sn-glycerol 3-phosphate (G3P), the key precursor for phospholipid synthesis. In Mycobacterium bovis (strain ATCC BAA-935 / AF2122/97), this protein is Glycerol-3-phosphate dehydrogenase [NAD(P)+] 2.